A 1182-amino-acid chain; its full sequence is Rho GTPase-activating protein 20 (1182 aa).

The disordered stretch occupies residues 1 to 40 (MEAMSPQQDALGAQPGRSSSLTGMSRIAGGPGTKKKMKTL). Residue Ser46 is modified to Phosphoserine. In terms of domain architecture, PH spans 86–187 (LLIDGPVELK…SLLQRYIALE (102 aa)). The 90-residue stretch at 194–283 (KSIPLKIFAK…TALLTQGSKD (90 aa)) folds into the Ras-associating domain. Positions 365 to 551 (VSLPDICEND…FLIENCCRIF (187 aa)) constitute a Rho-GAP domain. Phosphoserine is present on residues Ser704 and Ser730. 4 disordered regions span residues 744–791 (KQTQ…IQET), 932–953 (ASYS…SSQD), 981–1009 (QRKQ…GQAS), and 1140–1182 (EESG…GDRH). Residues 757–775 (FKQSSVTGTDVSKRNTANE) are compositionally biased toward polar residues. A compositionally biased stretch (low complexity) spans 933-953 (SYSSLSSPGTSPSGSSVSSQD).

In terms of tissue distribution, highest expression is found in testis. Ubiquitously expressed in extragonadal tissues.

GTPase activator for the Rho-type GTPases by converting them to an inactive GDP-bound state. The polypeptide is Rho GTPase-activating protein 20 (Arhgap20) (Rattus norvegicus (Rat)).